The primary structure comprises 92 residues: uncharacterized protein (92 aa).

In terms of biological role, homolog of shope fibroma virus T4A ORF. This is an uncharacterized protein from Swinepox virus (strain Kasza) (SWPV).